The primary structure comprises 434 residues: Glutamyl-tRNA reductase (434 aa).

Substrate is bound by residues Thr52–Arg55, Ser115, Glu120–Gln122, and Gln126. Cys53 acts as the Nucleophile in catalysis. Residue Gly195 to Ile200 coordinates NADP(+).

Belongs to the glutamyl-tRNA reductase family. Homodimer.

The enzyme catalyses (S)-4-amino-5-oxopentanoate + tRNA(Glu) + NADP(+) = L-glutamyl-tRNA(Glu) + NADPH + H(+). The protein operates within porphyrin-containing compound metabolism; protoporphyrin-IX biosynthesis; 5-aminolevulinate from L-glutamyl-tRNA(Glu): step 1/2. In terms of biological role, catalyzes the NADPH-dependent reduction of glutamyl-tRNA(Glu) to glutamate 1-semialdehyde (GSA). The polypeptide is Glutamyl-tRNA reductase (Cupriavidus pinatubonensis (strain JMP 134 / LMG 1197) (Cupriavidus necator (strain JMP 134))).